The sequence spans 585 residues: Bestrophin-1 (585 aa).

Residues 1–31 (MTITYTSQVANARLGSFSRLLLCWRGSIYKL) lie on the Cytoplasmic side of the membrane. Residue Ala-10 coordinates Ca(2+). The chain crosses the membrane as a helical span at residues 32–51 (LYGEFFIFLLCYYIIRFIYR). Topologically, residues 52-60 (LALTEEQQL) are extracellular. The helical transmembrane segment at 61 to 82 (MFEKLTLYCDSYIQLIPISFVL) threads the bilayer. Topologically, residues 83–237 (GFYVTLVVTR…DWISIPLVYT (155 aa)) are cytoplasmic. A helical transmembrane segment spans residues 238–255 (QVVTVAVYSFFLTCLVGR). Over 256–274 (QFLNPAKAYPGHELDLVVP) the chain is Extracellular. A helical transmembrane segment spans residues 275 to 288 (VFTFLQFFFYVGWL). Over 289 to 585 (KVAEQLINPF…ALENRDEAHS (297 aa)) the chain is Cytoplasmic. 4 residues coordinate Ca(2+): Gln-293, Asn-296, Asp-301, and Asp-304. Residues 346 to 379 (PYTAASAQFRRASFMGSTFNISLNKEEMEFQPNQ) form an auto-inhibitory segment region.

The protein belongs to the anion channel-forming bestrophin (TC 1.A.46) family. Calcium-sensitive chloride channel subfamily. In terms of assembly, interacts with YWHAG; this interaction promotes the ligand-gated L-glutamate channel activity leading to the positive regulation of NMDA glutamate receptor activity through the L-glutamate secretion.

It is found in the cell membrane. The protein resides in the basolateral cell membrane. The catalysed reaction is chloride(in) = chloride(out). It carries out the reaction hydrogencarbonate(in) = hydrogencarbonate(out). It catalyses the reaction 4-aminobutanoate(in) = 4-aminobutanoate(out). The enzyme catalyses L-glutamate(out) = L-glutamate(in). Functionally, ligand-gated anion channel that allows the movement of anions across cell membranes when activated by calcium (Ca2+). Allows the movement of chloride and hydrogencarbonate. Found in a partially open conformation leading to significantly smaller chloride movement. Upon F2R/PAR-1 activation, the sequestered calcium is released into the cytosol of astrocytes, leading to the (Ca2+)-dependent release of L-glutamate into the synaptic cleft that targets the neuronal postsynaptic GRIN2A/NMDAR receptor resulting in the synaptic plasticity regulation. Upon activation of the norepinephrine-alpha-1 adrenergic receptor signaling pathway, transports as well D-serine than L-glutamate in a (Ca2+)-dependent manner, leading to activation of adjacent NMDAR receptors and therefore regulates the heterosynaptic long-term depression and metaplasticity during initial memory acquisition. Releases the 4-aminobutanoate neurotransmitter in a (Ca2+)-dependent manner, and participates in its tonic release from cerebellar glial cells. The sequence is that of Bestrophin-1 (BEST1) from Macaca fascicularis (Crab-eating macaque).